The primary structure comprises 304 residues: Small ribosomal subunit biogenesis GTPase RsgA (304 aa).

The CP-type G domain maps to 78 to 237 (VSFLTRPPVA…VADTPGFNRP (160 aa)). GTP contacts are provided by residues 127-130 (TKTD) and 179-187 (GPSGVGKSS). Zn(2+) is bound by residues cysteine 262, cysteine 267, histidine 269, and cysteine 275.

Belongs to the TRAFAC class YlqF/YawG GTPase family. RsgA subfamily. In terms of assembly, monomer. Associates with 30S ribosomal subunit, binds 16S rRNA. Zn(2+) serves as cofactor.

It localises to the cytoplasm. In terms of biological role, one of several proteins that assist in the late maturation steps of the functional core of the 30S ribosomal subunit. Helps release RbfA from mature subunits. May play a role in the assembly of ribosomal proteins into the subunit. Circularly permuted GTPase that catalyzes slow GTP hydrolysis, GTPase activity is stimulated by the 30S ribosomal subunit. The polypeptide is Small ribosomal subunit biogenesis GTPase RsgA (Synechococcus sp. (strain CC9311)).